A 217-amino-acid polypeptide reads, in one-letter code: Imidazole glycerol phosphate synthase subunit HisH (217 aa).

In terms of domain architecture, Glutamine amidotransferase type-1 spans 1–212 (MLAILDYKAG…YEYCRQSRQE (212 aa)). Catalysis depends on C79, which acts as the Nucleophile. Active-site residues include H187 and E189.

Heterodimer of HisH and HisF.

It is found in the cytoplasm. The catalysed reaction is 5-[(5-phospho-1-deoxy-D-ribulos-1-ylimino)methylamino]-1-(5-phospho-beta-D-ribosyl)imidazole-4-carboxamide + L-glutamine = D-erythro-1-(imidazol-4-yl)glycerol 3-phosphate + 5-amino-1-(5-phospho-beta-D-ribosyl)imidazole-4-carboxamide + L-glutamate + H(+). It carries out the reaction L-glutamine + H2O = L-glutamate + NH4(+). The protein operates within amino-acid biosynthesis; L-histidine biosynthesis; L-histidine from 5-phospho-alpha-D-ribose 1-diphosphate: step 5/9. In terms of biological role, IGPS catalyzes the conversion of PRFAR and glutamine to IGP, AICAR and glutamate. The HisH subunit catalyzes the hydrolysis of glutamine to glutamate and ammonia as part of the synthesis of IGP and AICAR. The resulting ammonia molecule is channeled to the active site of HisF. The polypeptide is Imidazole glycerol phosphate synthase subunit HisH (Desulfovibrio desulfuricans (strain ATCC 27774 / DSM 6949 / MB)).